The sequence spans 92 residues: cAMP-dependent protein kinase inhibitor beta (92 aa).

Residues 1–26 (MGGGTSPEAQQDSVMRTDSSEMTDVE) are disordered. Over residues 7-26 (PEAQQDSVMRTDSSEMTDVE) the composition is skewed to polar residues. Ser56 carries the phosphoserine modification. Basic and acidic residues predominate over residues 70–82 (EDAKTKNEEKDQG). Residues 70 to 92 (EDAKTKNEEKDQGQPKTPLNEGK) are disordered.

Belongs to the PKI family.

Functionally, extremely potent competitive inhibitor of cAMP-dependent protein kinase activity, this protein interacts with the catalytic subunit of the enzyme after the cAMP-induced dissociation of its regulatory chains. In Mus musculus (Mouse), this protein is cAMP-dependent protein kinase inhibitor beta (Pkib).